Consider the following 468-residue polypeptide: Protein translocase subunit SecY (468 aa).

The Cytoplasmic portion of the chain corresponds to 1 to 20 (MGARDVIYAMEKWFPEVERP). The chain crosses the membrane as a helical span at residues 21-47 (KKHVPLKEKFVWTGLALVLYYVLAEIP). Residues 48-58 (VYGIPKKIQDY) lie on the Extracellular side of the membrane. An intramembrane region (helical) is located at residues 59–66 (FQFLRVVL). Residues 59-87 (FQFLRVVLAGRNGSILTLGIGPIVTAGII) form a discontinuously helical membrane-spanning segment. The stretch at 67 to 78 (AGRNGSILTLGI) is an intramembrane region. An intramembrane region (helical) is located at residues 79 to 87 (GPIVTAGII). Residues 88 to 108 (LQLLVGSELIRLDLANPEDRR) are Cytoplasmic-facing. Residues 109–133 (FYQALQRVFSVFMCFFEAAIWVLGG) form a helical membrane-spanning segment. Over 134 to 144 (AFGRVGVDVTY) the chain is Extracellular. A helical transmembrane segment spans residues 145 to 169 (TIATLMIIQLALGGIILIVLDELVS). Topologically, residues 170-175 (KWGIGS) are cytoplasmic. Residues 176-194 (GISLFIAAGVSQRILTRSL) form a helical membrane-spanning segment. The Extracellular segment spans residues 195–239 (NPLTDPNIIDPLTGKPAIVGAIPYFIQHILDGDLKGALYRGGSAP). A helical transmembrane segment spans residues 240 to 261 (DMIAVTATIIVFLVVVYFESMR). Topologically, residues 262-285 (VEIPLGYRGVTIRGRYPIKFLYVS) are cytoplasmic. The helical transmembrane segment at 286 to 307 (NIPIILTFALYANIQLWARVLD) threads the bilayer. The Extracellular segment spans residues 308–346 (RFGHPWLGRFDPVTGNPIGGFVLYVIPPRNIFTVIDNPV). The helical transmembrane segment at 347–366 (RAIIYLILTIIFSLLFGFLW) threads the bilayer. The Cytoplasmic segment spans residues 367–409 (VELTGLDARTIARQLQRAGLQIPGFRRDPRTLERVLQKYIPYV). The chain crosses the membrane as a helical span at residues 410–428 (TFWGSLTVALISVLADFLG). Over 429–431 (ALG) the chain is Extracellular. Residues 432–446 (TGTGILLTVGILYRF) form a helical membrane-spanning segment. Residues 447–468 (YEEIAREQITEMFPALRRLFKG) are Cytoplasmic-facing.

This sequence belongs to the SecY/SEC61-alpha family. In terms of assembly, component of the Sec protein translocase complex. Heterotrimer consisting of alpha (SecY), beta (SecG) and gamma (SecE) subunits. The heterotrimers can form oligomers, although 1 heterotrimer is thought to be able to translocate proteins. Interacts with the ribosome. May interact with SecDF, and other proteins may be involved.

The protein localises to the cell membrane. In terms of biological role, the central subunit of the protein translocation channel SecYEG. Consists of two halves formed by TMs 1-5 and 6-10. These two domains form a lateral gate at the front which open onto the bilayer between TMs 2 and 7, and are clamped together by SecE at the back. The channel is closed by both a pore ring composed of hydrophobic SecY resides and a short helix (helix 2A) on the extracellular side of the membrane which forms a plug. The plug probably moves laterally to allow the channel to open. The ring and the pore may move independently. The protein is Protein translocase subunit SecY of Pyrococcus horikoshii (strain ATCC 700860 / DSM 12428 / JCM 9974 / NBRC 100139 / OT-3).